Reading from the N-terminus, the 316-residue chain is Zinc finger protein 367 (316 aa).

The interval 61–97 is disordered; it reads VTLGPGSGSGAASPTRTSSSPAEADPLSCPEHLKDGI. Low complexity predominate over residues 70–82; that stretch reads GAASPTRTSSSPA. 2 C2H2-type zinc fingers span residues 121 to 143 and 149 to 173; these read IRCNICNRVFPREKSLQAHKRTH and YLCDYPDCGKAFVQSGQLKTHQRLH. The disordered stretch occupies residues 234–294; the sequence is QTREQRSPVP…GGVVTARRRL (61 aa). The segment covering 255–278 has biased composition (acidic residues); it reads EDQEQQDPLDFLPSDEGEEEEQEE. Residues 289 to 313 adopt a coiled-coil conformation; the sequence is TARRRLQEQRERLHGALALIELANN.

Belongs to the krueppel C2H2-type zinc-finger protein family.

It is found in the nucleus. Functionally, transcriptional activator. This is Zinc finger protein 367 (znf367) from Danio rerio (Zebrafish).